The following is a 147-amino-acid chain: Nucleoside diphosphate kinase (147 aa).

Lys9, Phe57, Arg85, Thr91, Arg102, and Asn112 together coordinate ATP. Residue His115 is the Pros-phosphohistidine intermediate of the active site.

It belongs to the NDK family. As to quaternary structure, homotetramer. Mg(2+) serves as cofactor.

The protein localises to the cytoplasm. It catalyses the reaction a 2'-deoxyribonucleoside 5'-diphosphate + ATP = a 2'-deoxyribonucleoside 5'-triphosphate + ADP. It carries out the reaction a ribonucleoside 5'-diphosphate + ATP = a ribonucleoside 5'-triphosphate + ADP. Major role in the synthesis of nucleoside triphosphates other than ATP. The ATP gamma phosphate is transferred to the NDP beta phosphate via a ping-pong mechanism, using a phosphorylated active-site intermediate. The chain is Nucleoside diphosphate kinase from Listeria welshimeri serovar 6b (strain ATCC 35897 / DSM 20650 / CCUG 15529 / CIP 8149 / NCTC 11857 / SLCC 5334 / V8).